Here is a 732-residue protein sequence, read N- to C-terminus: Elongation factor 2 (732 aa).

The tr-type G domain maps to Glu-19 to Thr-230. Residues Ala-28 to Thr-35, Asp-94 to His-98, and Asn-148 to Asp-151 contribute to the GTP site. Residue His-597 is modified to Diphthamide.

The protein belongs to the TRAFAC class translation factor GTPase superfamily. Classic translation factor GTPase family. EF-G/EF-2 subfamily.

It localises to the cytoplasm. Catalyzes the GTP-dependent ribosomal translocation step during translation elongation. During this step, the ribosome changes from the pre-translocational (PRE) to the post-translocational (POST) state as the newly formed A-site-bound peptidyl-tRNA and P-site-bound deacylated tRNA move to the P and E sites, respectively. Catalyzes the coordinated movement of the two tRNA molecules, the mRNA and conformational changes in the ribosome. In Thermococcus gammatolerans (strain DSM 15229 / JCM 11827 / EJ3), this protein is Elongation factor 2.